We begin with the raw amino-acid sequence, 431 residues long: Adenylosuccinate synthetase (431 aa).

Residues 13 to 19 (GDEGKGK) and 41 to 43 (GHT) each bind GTP. Asp14 acts as the Proton acceptor in catalysis. Mg(2+)-binding residues include Asp14 and Gly41. Residues 14-17 (DEGK), 39-42 (NAGH), Thr130, Arg144, Gln225, Thr240, and Arg304 each bind IMP. The Proton donor role is filled by His42. 300–306 (ATTGRKR) provides a ligand contact to substrate. GTP contacts are provided by residues Arg306, 332 to 334 (KLD), and 415 to 417 (STG).

The protein belongs to the adenylosuccinate synthetase family. As to quaternary structure, homodimer. The cofactor is Mg(2+).

Its subcellular location is the cytoplasm. The catalysed reaction is IMP + L-aspartate + GTP = N(6)-(1,2-dicarboxyethyl)-AMP + GDP + phosphate + 2 H(+). It functions in the pathway purine metabolism; AMP biosynthesis via de novo pathway; AMP from IMP: step 1/2. In terms of biological role, plays an important role in the de novo pathway of purine nucleotide biosynthesis. Catalyzes the first committed step in the biosynthesis of AMP from IMP. The protein is Adenylosuccinate synthetase of Shewanella loihica (strain ATCC BAA-1088 / PV-4).